Reading from the N-terminus, the 295-residue chain is MMSRTPDARARDTQTKQIQENITSVEKHFGDLCQLFAAYVRKTARLRDKADLLVKEINVYADTETPNLKCGLKNFADQLAKVQDYRQAEVERLEVKVIEPLKAYGNIVKTKREDLKQTQSARNREAKQMQQLERMRQRNPSDRQIISQAESELQRATMDATRTTRQLEETIDDFEKQKIRDIKKVLGEFVTVEMAFHAKALEIYTTAYQHIQNVDEEGDLEVFRNSLHPPDYQSRLEIVRANSKLSLNRTGTSMSKSGTMQSRTSSRQRKRDDEEDEEEDDEDEDDLEEVTDDEH.

The N-terminal 49 residues, 1–49 (MMSRTPDARARDTQTKQIQENITSVEKHFGDLCQLFAAYVRKTARLRDK), are a transit peptide targeting the mitochondrion. Positions 12 to 222 (DTQTKQIQEN…NVDEEGDLEV (211 aa)) are BAR-like. Residues 111–185 (KREDLKQTQS…KQKIRDIKKV (75 aa)) are a coiled coil. Over residues 243-265 (SKLSLNRTGTSMSKSGTMQSRTS) the composition is skewed to polar residues. The tract at residues 243–295 (SKLSLNRTGTSMSKSGTMQSRTSSRQRKRDDEEDEEEDDEDEDDLEEVTDDEH) is disordered. Positions 273–295 (DEEDEEEDDEDEDDLEEVTDDEH) are enriched in acidic residues.

It belongs to the CIBAR family.

The protein localises to the cytoplasm. It localises to the cytoskeleton. The protein resides in the microtubule organizing center. Its subcellular location is the centrosome. It is found in the centriole. The protein localises to the cell projection. It localises to the cilium. The protein resides in the nucleus. Its subcellular location is the mitochondrion inner membrane. It is found in the flagellum. In terms of biological role, plays a critical role in regulating mitochondrial ultrastructure and function by maintaining the integrity of mitochondrial morphology, particularly the organization of cristae. Plays a crucial role in ciliogenesis. Plays a key role in the correct positioning of the annulus, a septin-based ring structure in the sperm flagellum, serving both as a physical barrier and a membrane diffusion barrier that separates the midpiece (MP) from the principal piece (PP). The protein is CBY1-interacting BAR domain-containing protein 1 (cibar1) of Danio rerio (Zebrafish).